A 391-amino-acid polypeptide reads, in one-letter code: Homocitrate synthase AksA (391 aa).

One can recognise a Pyruvate carboxyltransferase domain in the interval 20–271; the sequence is ITIYDTTLRD…DLGFNIGVLY (252 aa).

Belongs to the alpha-IPM synthase/homocitrate synthase family.

The catalysed reaction is acetyl-CoA + 2-oxoglutarate + H2O = (2R)-homocitrate + CoA + H(+). It catalyses the reaction 2-oxoadipate + acetyl-CoA + H2O = (R)-dihomocitrate + CoA + H(+). It carries out the reaction 2-oxoheptanedioate + acetyl-CoA + H2O = (R)-trihomocitrate + CoA + H(+). Its pathway is organic acid metabolism; 2-oxosuberate biosynthesis. Catalyzes the condensation of alpha-ketoglutarate and acetyl-CoA to form (R)-homocitrate. Can also catalyze the condensation of alpha-ketoadipate with acetyl-CoA to form (R)-homo(2)citrate, and the condensation of alpha-ketopimelate with acetyl-CoA to form (R)-homo(3)citrate. These reactions are part of the biosynthesis pathway of coenzyme B and biotin. The sequence is that of Homocitrate synthase AksA (aksA) from Methanothermobacter thermautotrophicus (strain ATCC 29096 / DSM 1053 / JCM 10044 / NBRC 100330 / Delta H) (Methanobacterium thermoautotrophicum).